Reading from the N-terminus, the 975-residue chain is Glycine dehydrogenase (decarboxylating) (975 aa).

Position 723 is an N6-(pyridoxal phosphate)lysine (Lys723).

Belongs to the GcvP family. As to quaternary structure, the glycine cleavage system is composed of four proteins: P, T, L and H. It depends on pyridoxal 5'-phosphate as a cofactor.

It carries out the reaction N(6)-[(R)-lipoyl]-L-lysyl-[glycine-cleavage complex H protein] + glycine + H(+) = N(6)-[(R)-S(8)-aminomethyldihydrolipoyl]-L-lysyl-[glycine-cleavage complex H protein] + CO2. Its function is as follows. The glycine cleavage system catalyzes the degradation of glycine. The P protein binds the alpha-amino group of glycine through its pyridoxal phosphate cofactor; CO(2) is released and the remaining methylamine moiety is then transferred to the lipoamide cofactor of the H protein. The protein is Glycine dehydrogenase (decarboxylating) of Burkholderia multivorans (strain ATCC 17616 / 249).